The chain runs to 40 residues: Snaclec LmrLEC-1 (40 aa).

The cysteines at positions 2 and 13 are disulfide-linked.

It belongs to the snaclec family. Dimer (non-covalently linked) of heterodimers of subunits alpha and beta (disulfide-linked). In terms of tissue distribution, expressed by the venom gland.

Its subcellular location is the secreted. Functionally, interferes with one step of hemostasis (modulation of platelet aggregation, or coagulation cascade, for example). The sequence is that of Snaclec LmrLEC-1 from Lachesis muta rhombeata (Bushmaster).